A 259-amino-acid chain; its full sequence is Deoxyribose-phosphate aldolase (259 aa).

Asp102 acts as the Proton donor/acceptor in catalysis. Residue Lys167 is the Schiff-base intermediate with acetaldehyde of the active site. The Proton donor/acceptor role is filled by Lys201.

This sequence belongs to the DeoC/FbaB aldolase family. DeoC type 2 subfamily.

It localises to the cytoplasm. The enzyme catalyses 2-deoxy-D-ribose 5-phosphate = D-glyceraldehyde 3-phosphate + acetaldehyde. It participates in carbohydrate degradation; 2-deoxy-D-ribose 1-phosphate degradation; D-glyceraldehyde 3-phosphate and acetaldehyde from 2-deoxy-alpha-D-ribose 1-phosphate: step 2/2. Its function is as follows. Catalyzes a reversible aldol reaction between acetaldehyde and D-glyceraldehyde 3-phosphate to generate 2-deoxy-D-ribose 5-phosphate. The polypeptide is Deoxyribose-phosphate aldolase (Erwinia tasmaniensis (strain DSM 17950 / CFBP 7177 / CIP 109463 / NCPPB 4357 / Et1/99)).